We begin with the raw amino-acid sequence, 143 residues long: Small ribosomal subunit protein uS12 (143 aa).

Residues Met-1–Asp-19 are compositionally biased toward basic residues. The segment at Met-1–Ala-23 is disordered. Pro-62 is modified (3-hydroxyproline).

It belongs to the universal ribosomal protein uS12 family. In terms of assembly, component of the 40S small ribosomal subunit. Post-translationally, hydroxylation at Pro-62 affects translation termination efficiency.

It localises to the cytoplasm. The protein resides in the cytosol. Its subcellular location is the rough endoplasmic reticulum. This is Small ribosomal subunit protein uS12 (RpS23) from Drosophila melanogaster (Fruit fly).